We begin with the raw amino-acid sequence, 432 residues long: Guanine nucleotide-binding protein subunit alpha (432 aa).

The tract at residues 1-97 (MGGCMSTPEA…SKGNKDRSNQ (97 aa)) is disordered. Glycine 2 carries the N-myristoyl glycine lipid modification. A lipid anchor (S-palmitoyl cysteine) is attached at cysteine 4. Residues 21–52 (PSTSTSSRPPQASTSATATAAGAGTSAANGTA) show a composition bias toward low complexity. In terms of domain architecture, G-alpha spans 111–432 (KECKILLLGS…QNALRDSGIL (322 aa)). Residues 114–127 (KILLLGSGESGKST) are G1 motif. GTP contacts are provided by glutamate 122, serine 123, glycine 124, lysine 125, serine 126, threonine 127, aspartate 230, leucine 255, threonine 261, glycine 283, asparagine 349, lysine 350, aspartate 352, and alanine 404. Residue serine 126 participates in Mg(2+) binding. The G2 motif stretch occupies residues 253-261 (DVLRARTKT). Threonine 261 is a binding site for Mg(2+). The tract at residues 276–285 (IHMFDVGGQR) is G3 motif. Residues 345–352 (ILFLNKID) are G4 motif. The segment at 402-407 (TQATDT) is G5 motif.

The protein belongs to the G-alpha family. In terms of assembly, g proteins are composed of 3 units; alpha, beta and gamma. The alpha chain contains the guanine nucleotide binding site. It depends on Mg(2+) as a cofactor.

In terms of biological role, guanine nucleotide-binding proteins (G proteins) are involved as modulators or transducers in various transmembrane signaling systems. Involved in the mating pathway. The sequence is that of Guanine nucleotide-binding protein subunit alpha (GPA1) from Cryptococcus neoformans var. neoformans serotype D (strain B-3501A) (Filobasidiella neoformans).